The primary structure comprises 541 residues: Solute carrier family 22 member 10 (541 aa).

At 1-15 the chain is on the cytoplasmic side; that stretch reads MAFEELLSQVGGLGR. Residues 16 to 36 traverse the membrane as a helical segment; it reads FQMLHLVFILPSLMLLIPHIL. The Extracellular segment spans residues 37–145; that stretch reads LENFAAAIPG…DLVCDYQSLK (109 aa). N-linked (GlcNAc...) asparagine glycans are attached at residues Asn-56 and Asn-102. A helical transmembrane segment spans residues 146-166; sequence SVVQFLLLTGMLVGGIIGGHV. At 167 to 193 the chain is on the cytoplasmic side; that stretch reads SDRFGRRFILRWCLLQLAITDTCAAFA. Residues 194–214 traverse the membrane as a helical segment; it reads PTFPVYCVLRFLAGFSSMIII. Residues 215–230 are Extracellular-facing; it reads SNNSLPITEWIRPNSK. Residues 231 to 251 traverse the membrane as a helical segment; that stretch reads ALVVILSSGALSIGQIILGGL. Residues 252–259 lie on the Cytoplasmic side of the membrane; it reads AYVFRDWQ. The chain crosses the membrane as a helical span at residues 260–280; that stretch reads TLHVVASVPFFVFFLLSRWLV. At 281 to 349 the chain is on the extracellular side; the sequence is ESARWLIITN…LFRNPSMRKR (69 aa). Residues 350 to 370 traverse the membrane as a helical segment; the sequence is ICILVFLRFANTIPFYGTMVN. The Cytoplasmic portion of the chain corresponds to 371–377; the sequence is LQHVGSN. A helical transmembrane segment spans residues 378–398; the sequence is IFLLQVLYGAVALIVRCLALL. Over 399–406 the chain is Extracellular; it reads TLNHMGRR. Residues 407–427 form a helical membrane-spanning segment; it reads ISQILFMFLVGLSILANTFVP. Over 428 to 436 the chain is Cytoplasmic; the sequence is KEMQTLRVA. Residues 437–457 form a helical membrane-spanning segment; sequence LACLGIGCSAATFSSVAVHFI. The Extracellular segment spans residues 458–472; sequence ELIPTVLRARASGID. A helical transmembrane segment spans residues 473–493; the sequence is LTASRIGAALAPLLMTLTVFF. The Cytoplasmic segment spans residues 494–495; the sequence is TT. A helical membrane pass occupies residues 496 to 516; sequence LPWIIYGIFPIIGGLIVFLLP. The Extracellular segment spans residues 517–541; it reads ETKNLPLPDTIKDVENQKKNLKEKA.

It belongs to the major facilitator (TC 2.A.1) superfamily. Organic cation transporter (TC 2.A.1.19) family. Detected in fetal and adult liver, and in adult kidney.

The protein resides in the membrane. The polypeptide is Solute carrier family 22 member 10 (SLC22A10) (Homo sapiens (Human)).